Consider the following 151-residue polypeptide: SsrA-binding protein (151 aa).

This sequence belongs to the SmpB family.

The protein localises to the cytoplasm. In terms of biological role, required for rescue of stalled ribosomes mediated by trans-translation. Binds to transfer-messenger RNA (tmRNA), required for stable association of tmRNA with ribosomes. tmRNA and SmpB together mimic tRNA shape, replacing the anticodon stem-loop with SmpB. tmRNA is encoded by the ssrA gene; the 2 termini fold to resemble tRNA(Ala) and it encodes a 'tag peptide', a short internal open reading frame. During trans-translation Ala-aminoacylated tmRNA acts like a tRNA, entering the A-site of stalled ribosomes, displacing the stalled mRNA. The ribosome then switches to translate the ORF on the tmRNA; the nascent peptide is terminated with the 'tag peptide' encoded by the tmRNA and targeted for degradation. The ribosome is freed to recommence translation, which seems to be the essential function of trans-translation. This Chlamydia muridarum (strain MoPn / Nigg) protein is SsrA-binding protein.